A 49-amino-acid chain; its full sequence is Large ribosomal subunit protein eL40 (49 aa).

It belongs to the eukaryotic ribosomal protein eL40 family.

The chain is Large ribosomal subunit protein eL40 from Archaeoglobus fulgidus (strain ATCC 49558 / DSM 4304 / JCM 9628 / NBRC 100126 / VC-16).